The following is a 297-amino-acid chain: Molybdate/tungstate import ATP-binding protein WtpC (297 aa).

Residues Leu-2–Leu-226 form the ABC transporter domain. Gly-32–Ser-39 contacts ATP.

It belongs to the ABC transporter superfamily. Sulfate/tungstate importer (TC 3.A.1.6) family. In terms of assembly, the complex is composed of two ATP-binding proteins (WtpC), two transmembrane proteins (WtpB) and a solute-binding protein (WtpA).

It is found in the cell membrane. The enzyme catalyses tungstate(in) + ATP + H2O = tungstate(out) + ADP + phosphate + H(+). Its function is as follows. Part of the ABC transporter complex WtpABC involved in molybdate/tungstate import. Responsible for energy coupling to the transport system. This chain is Molybdate/tungstate import ATP-binding protein WtpC (wtpC), found in Methanocaldococcus jannaschii (strain ATCC 43067 / DSM 2661 / JAL-1 / JCM 10045 / NBRC 100440) (Methanococcus jannaschii).